The chain runs to 446 residues: Packaging protein 1 (446 aa).

A disordered region spans residues 1-72 (MEEKAGLRHL…SQVSKSKKQR (72 aa)). Over residues 10–21 (LQNQQNEPSQDP) the composition is skewed to polar residues. Residues 32–43 (HSDRNHLNKEAE) are compositionally biased toward basic and acidic residues. 170–177 (GPTGCGKS) serves as a coordination point for ATP. A DNA-binding region spans residues 439-446 (RYYHSKKK).

It belongs to the adenoviridae packaging protein 1 family. In terms of assembly, homodimer. Part of a genome packaging complex composed of packaging proteins 1, 2 and 3; this complex specifically binds to the packaging sequence on the left end of viral genomic DNA and performs packaging of the viral genome. Interacts with protein 33K.

The protein resides in the virion. It localises to the host nucleus. The protein localises to the host nucleoplasm. It is found in the host nucleolus. Its function is as follows. Component of the packaging machinery which encapsidates the viral DNA into preformed capsids and transcriptional activator of the viral major late promoter (MLP). Binds, along with packaging proteins 2 and 3, to the specific packaging sequence on the left end of viral genomic DNA and displays ATPase activity thereby providing the power stroke of the packaging machinery. The activity of packaging protein IVa2 is stimulated by protein 33K which acts as a terminase. May be the protein that pumps DNA into the capsid powered by ATP hydrolysis. Specifically binds to the 5'-CG-3' nucleotides of the repeats making up the packaging sequence. Component of the DEF-A and DEF-B transcription factors that bind downstream elements of the major late promoter (MLP), and stimulate transcription from the MLP after initiation of viral DNA replication. DEF-A is a heterodimer packaging proteins 1 and 2 and DEF-B is a homodimer of packaging protein 1. This Canine adenovirus serotype 1 (strain CLL) (CAdV-1) protein is Packaging protein 1.